Consider the following 398-residue polypeptide: Riboflavin transporter RfnT (398 aa).

Transmembrane regions (helical) follow at residues 13–35 (ILTIAQALGASSPPIVISLGGLV), 45–67 (LVTLPVSLFNLGLALGTLPAAFF), 74–91 (RNAYMLGALVGAAAGVIA), 95–117 (IFAASFLIFCLGTLTAGFYASYV), 137–156 (ISWVMVGGLVAAIVGPQLVI), 166–188 (MFAGSFLSQAVLGLLALPVLFML), 220–242 (VAAGVCSYALMTFVMTAAPIAMV), 252–274 (ALGIQWHVLAMFAPSFFTGKLIT), 281–300 (ITALGLVLIAFSAIIALGGF), 305–324 (FWGALIFLGIGWNFGFIGAT), 345–367 (FIMFGTVACASFFAGSLLHSSGW), and 372–389 (WLVFPIVALVLVPLILRL).

Belongs to the major facilitator superfamily.

Its subcellular location is the cell membrane. Its function is as follows. Transports riboflavin into the cell. The polypeptide is Riboflavin transporter RfnT (Brucella anthropi (strain ATCC 49188 / DSM 6882 / CCUG 24695 / JCM 21032 / LMG 3331 / NBRC 15819 / NCTC 12168 / Alc 37) (Ochrobactrum anthropi)).